A 1062-amino-acid polypeptide reads, in one-letter code: Isoleucine--tRNA ligase (1062 aa).

Residues 47–57 carry the 'HIGH' region motif; it reads PYTTGHIHLGT. The short motif at 591–595 is the 'KMSKS' region element; that stretch reads KMSKS. Lys-594 is an ATP binding site.

It belongs to the class-I aminoacyl-tRNA synthetase family. IleS type 2 subfamily. Monomer. Zn(2+) serves as cofactor.

The protein resides in the cytoplasm. The enzyme catalyses tRNA(Ile) + L-isoleucine + ATP = L-isoleucyl-tRNA(Ile) + AMP + diphosphate. Functionally, catalyzes the attachment of isoleucine to tRNA(Ile). As IleRS can inadvertently accommodate and process structurally similar amino acids such as valine, to avoid such errors it has two additional distinct tRNA(Ile)-dependent editing activities. One activity is designated as 'pretransfer' editing and involves the hydrolysis of activated Val-AMP. The other activity is designated 'posttransfer' editing and involves deacylation of mischarged Val-tRNA(Ile). The polypeptide is Isoleucine--tRNA ligase (Methanospirillum hungatei JF-1 (strain ATCC 27890 / DSM 864 / NBRC 100397 / JF-1)).